We begin with the raw amino-acid sequence, 173 residues long: Lens fiber membrane intrinsic protein (173 aa).

At 1–3 (MYS) the chain is on the cytoplasmic side. Residues 4-24 (FMGGGLFCAWVGTILLVVATA) traverse the membrane as a helical segment. At 25–66 (TDHWMQYRLSGAFAHQGLWRYCLGTKCYLQTESIAYWNATRA) the chain is on the extracellular side. W43 and W61 each carry a C-linked (Man) tryptophan; partial glycan. A helical transmembrane segment spans residues 67–87 (FMILSSLCATSGIIMGIVAFA). Topologically, residues 88–98 (QQPTFTRLSRP) are cytoplasmic. A helical transmembrane segment spans residues 99–119 (FSAGIMFFASTFFVLLALAIY). At 120 to 140 (TGVTVSFLGRRFGDWRFSWSY) the chain is on the extracellular side. A helical transmembrane segment spans residues 141-161 (ILGWVALLMTFFAGIFYMCAY). Topologically, residues 162–173 (RMHECRRLSTPR) are cytoplasmic. At S170 the chain carries Phosphoserine. T171 is subject to Phosphothreonine.

This sequence belongs to the PMP-22/EMP/MP20 family. As to quaternary structure, seems to be associated with itself or another lens membrane component via disulfide bonds. In terms of processing, predominantly monophosphorylated on Ser-170. Only about 15% diphosphorylated on both Ser-170 and Thr-171. Post-translationally, C-glycosylated. Trp-43 is more extensively C-glycosylated than Trp-61. C-glycosylation may be involved in membrane trafficking. Eye lens specific.

It is found in the membrane. In terms of biological role, present in the thicker 16-17 nm junctions of mammalian lens fiber cells, where it may contribute to cell junctional organization. Acts as a receptor for calmodulin. May play an important role in both lens development and cataractogenesis. This Bos taurus (Bovine) protein is Lens fiber membrane intrinsic protein (LIM2).